The primary structure comprises 227 residues: Cytidylate kinase (227 aa).

Residue 12–20 participates in ATP binding; the sequence is GPSGAGKGT.

The protein belongs to the cytidylate kinase family. Type 1 subfamily.

Its subcellular location is the cytoplasm. It catalyses the reaction CMP + ATP = CDP + ADP. It carries out the reaction dCMP + ATP = dCDP + ADP. The chain is Cytidylate kinase from Marinomonas sp. (strain MWYL1).